Reading from the N-terminus, the 290-residue chain is Alpha-mannosidase (290 aa).

D17 (nucleophile) is an active-site residue. N-linked (GlcNAc...) asparagine glycosylation occurs at N64.

It belongs to the glycosyl hydrolase 38 family. In terms of assembly, dimer. Zn(2+) serves as cofactor.

It catalyses the reaction Hydrolysis of terminal, non-reducing alpha-D-mannose residues in alpha-D-mannosides.. With respect to regulation, inhibited by swainsonine but not by 1-desoxymannojirimycin. Functionally, liberates mannose from p-nitrophenyl-alpha-D-mannoside. This Lablab purpureus (Hyacinth bean) protein is Alpha-mannosidase.